A 599-amino-acid chain; its full sequence is Elongation factor 4 (599 aa).

One can recognise a tr-type G domain in the interval 2 to 184; it reads KNIRNFSIIA…RLVRDIPPPE (183 aa). GTP is bound by residues 14-19 and 131-134; these read DHGKST and NKID.

Belongs to the TRAFAC class translation factor GTPase superfamily. Classic translation factor GTPase family. LepA subfamily.

It localises to the cell inner membrane. The enzyme catalyses GTP + H2O = GDP + phosphate + H(+). Its function is as follows. Required for accurate and efficient protein synthesis under certain stress conditions. May act as a fidelity factor of the translation reaction, by catalyzing a one-codon backward translocation of tRNAs on improperly translocated ribosomes. Back-translocation proceeds from a post-translocation (POST) complex to a pre-translocation (PRE) complex, thus giving elongation factor G a second chance to translocate the tRNAs correctly. Binds to ribosomes in a GTP-dependent manner. This is Elongation factor 4 from Escherichia coli (strain UTI89 / UPEC).